Consider the following 472-residue polypeptide: MNMPQSLGNQPLPPEPPSLRTPAEGPGATSPPEHCWPVRPTLRNELDTFSVHFYIFFGPSVALPPERPAVFALRLLPVLDSGGVLSLELQLNVSSLRQENVTVFGCLTHEVPLSLGDAAVTCSKESLAGFLLTVSAASRVARLRIPFPQTGTWFLTLRSLCGVGPRFVRCRNATAEVRLRTFLSPCVDDCGPYGQCKLLRTHNYLYAACECKAGWRGWGCTDSADALTYGFQLLSTLLLCLSNLMFLPPVVLAIRSRYVLEAAVYTFTMFFSTFYHACDQPGIVVFCIMDYDVLQFCDFLGSLMSVWVTVIAMARLQPVVKQVLYLLGAMLLSMALQLDRHGLWNLLGPSLFALGILATAWTVRSVRRRHCYPPTWRRWLFCLCPGSLIAGSAILLYAFVETRDNYFYIHSIWHMLIAGSVGFLLPPRAKTDRRVPSGARARGCGYQLCINEQEELGLVGPGGATVSSICAS.

Residues 1-37 (MNMPQSLGNQPLPPEPPSLRTPAEGPGATSPPEHCWP) are disordered. The Extracellular segment spans residues 1-233 (MNMPQSLGNQ…ADALTYGFQL (233 aa)). 2 N-linked (GlcNAc...) asparagine glycosylation sites follow: Asn-92 and Asn-100. The EGF-like domain maps to 182-221 (FLSPCVDDCGPYGQCKLLRTHNYLYAACECKAGWRGWGCT). Intrachain disulfides connect Cys-186-Cys-196, Cys-190-Cys-209, and Cys-211-Cys-220. Residues 234-254 (LSTLLLCLSNLMFLPPVVLAI) form a helical membrane-spanning segment. Residues 255-257 (RSR) lie on the Cytoplasmic side of the membrane. A helical transmembrane segment spans residues 258 to 277 (YVLEAAVYTFTMFFSTFYHA). The Extracellular portion of the chain corresponds to 278-292 (CDQPGIVVFCIMDYD). A helical membrane pass occupies residues 293–313 (VLQFCDFLGSLMSVWVTVIAM). At 314–315 (AR) the chain is on the cytoplasmic side. The helical transmembrane segment at 316 to 336 (LQPVVKQVLYLLGAMLLSMAL) threads the bilayer. Residues 337–342 (QLDRHG) lie on the Extracellular side of the membrane. The chain crosses the membrane as a helical span at residues 343–363 (LWNLLGPSLFALGILATAWTV). Topologically, residues 364 to 379 (RSVRRRHCYPPTWRRW) are cytoplasmic. A helical membrane pass occupies residues 380-400 (LFCLCPGSLIAGSAILLYAFV). Residues 401-405 (ETRDN) are Extracellular-facing. The chain crosses the membrane as a helical span at residues 406–426 (YFYIHSIWHMLIAGSVGFLLP). Residues 427–472 (PRAKTDRRVPSGARARGCGYQLCINEQEELGLVGPGGATVSSICAS) are Cytoplasmic-facing.

This sequence belongs to the TMEM8 family. In terms of assembly, may interact with EZR. In terms of processing, N-glycosylated.

It localises to the cell membrane. It is found in the cytoplasm. The protein resides in the nucleus. The protein localises to the mitochondrion. Its subcellular location is the endoplasmic reticulum. May function as a regulator of the EGFR pathway. Probable tumor suppressor which may function in cell growth, proliferation and adhesion. This is Transmembrane protein 8B (TMEM8B) from Bos taurus (Bovine).